Consider the following 397-residue polypeptide: Bifunctional enzyme IspD/IspF (397 aa).

The segment at 1-233 is 2-C-methyl-D-erythritol 4-phosphate cytidylyltransferase; it reads MCAKKYKIAA…KLLFEEPKFR (233 aa). The interval 233-397 is 2-C-methyl-D-erythritol 2,4-cyclodiphosphate synthase; the sequence is RVGAGYDIHK…VLLHTNFYWK (165 aa). Asp-239 and His-241 together coordinate a divalent metal cation. Residues 239-241 and 270-271 each bind 4-CDP-2-C-methyl-D-erythritol 2-phosphate; these read DIH and HS. His-278 serves as a coordination point for a divalent metal cation. 4-CDP-2-C-methyl-D-erythritol 2-phosphate contacts are provided by residues 292–294, 368–371, Tyr-375, and Arg-378; these read DIG and TTAE.

In the N-terminal section; belongs to the IspD/TarI cytidylyltransferase family. IspD subfamily. The protein in the C-terminal section; belongs to the IspF family. The cofactor is a divalent metal cation.

The enzyme catalyses 2-C-methyl-D-erythritol 4-phosphate + CTP + H(+) = 4-CDP-2-C-methyl-D-erythritol + diphosphate. It carries out the reaction 4-CDP-2-C-methyl-D-erythritol 2-phosphate = 2-C-methyl-D-erythritol 2,4-cyclic diphosphate + CMP. It functions in the pathway isoprenoid biosynthesis; isopentenyl diphosphate biosynthesis via DXP pathway; isopentenyl diphosphate from 1-deoxy-D-xylulose 5-phosphate: step 2/6. The protein operates within isoprenoid biosynthesis; isopentenyl diphosphate biosynthesis via DXP pathway; isopentenyl diphosphate from 1-deoxy-D-xylulose 5-phosphate: step 4/6. Functionally, bifunctional enzyme that catalyzes the formation of 4-diphosphocytidyl-2-C-methyl-D-erythritol from CTP and 2-C-methyl-D-erythritol 4-phosphate (MEP) (IspD), and catalyzes the conversion of 4-diphosphocytidyl-2-C-methyl-D-erythritol 2-phosphate (CDP-ME2P) to 2-C-methyl-D-erythritol 2,4-cyclodiphosphate (ME-CPP) with a corresponding release of cytidine 5-monophosphate (CMP) (IspF). In Wolbachia pipientis wMel, this protein is Bifunctional enzyme IspD/IspF.